The chain runs to 212 residues: Ribosomal RNA large subunit methyltransferase E (212 aa).

Gly-56, Trp-58, Asp-78, Asp-94, and Asp-117 together coordinate S-adenosyl-L-methionine. Catalysis depends on Lys-157, which acts as the Proton acceptor.

It belongs to the class I-like SAM-binding methyltransferase superfamily. RNA methyltransferase RlmE family.

Its subcellular location is the cytoplasm. The catalysed reaction is uridine(2552) in 23S rRNA + S-adenosyl-L-methionine = 2'-O-methyluridine(2552) in 23S rRNA + S-adenosyl-L-homocysteine + H(+). In terms of biological role, specifically methylates the uridine in position 2552 of 23S rRNA at the 2'-O position of the ribose in the fully assembled 50S ribosomal subunit. This Ehrlichia chaffeensis (strain ATCC CRL-10679 / Arkansas) protein is Ribosomal RNA large subunit methyltransferase E.